The following is a 196-amino-acid chain: Large ribosomal subunit protein uL14my (196 aa).

Residues 1–62 (MATALASKLS…TILKCVDNSC (62 aa)) constitute a mitochondrion transit peptide. Residues 148 to 175 (EKKGQNNSHGSKRKMEYNQPTGTRVFGP) are disordered.

Belongs to the universal ribosomal protein uL14 family. In terms of assembly, part of the mitochondrial 50S ribosomal subunit. Mostly expressed in pistils and inflorescences, including floral organs and meristems, and, to a lower extent, in leaves.

Its subcellular location is the mitochondrion. Functionally, binds to 23S rRNA in mitochondrion. Required for the formation of the proximal region of the ovule primordium during floral organogenesis, thus participating in patterning and growth of ovule. Also regulates the initiation and/or maintenance of integument and embryo sac ontogenesis. Prevents inappropriate cell death in the young ovule. The sequence is that of Large ribosomal subunit protein uL14my (HLL) from Arabidopsis thaliana (Mouse-ear cress).